Reading from the N-terminus, the 339-residue chain is Casein kinase II subunit alpha' (339 aa).

Positions 50-334 (YEIINKIGRG…AKEAMDHKFF (285 aa)) constitute a Protein kinase domain. Residues 56 to 64 (IGRGKYSEV) and lysine 79 each bind ATP. Aspartate 167 serves as the catalytic Proton acceptor.

The protein belongs to the protein kinase superfamily. Ser/Thr protein kinase family. CK2 subfamily. In terms of assembly, tetramer composed of an alpha chain, an alpha', one beta chain and one beta' chain. Interacts with FACT subunits POB3 and SPT16. Interacts with NAP1. Interacts with YTA7.

It catalyses the reaction L-seryl-[protein] + ATP = O-phospho-L-seryl-[protein] + ADP + H(+). The catalysed reaction is L-threonyl-[protein] + ATP = O-phospho-L-threonyl-[protein] + ADP + H(+). Functionally, catalytic subunit of a constitutively active serine/threonine-protein kinase complex that phosphorylates a large number of substrates containing acidic residues C-terminal to the phosphorylated serine or threonine. Phosphorylates YTA7 during S-phase to promote transcription of histones. The protein is Casein kinase II subunit alpha' of Saccharomyces cerevisiae (strain ATCC 204508 / S288c) (Baker's yeast).